Here is a 120-residue protein sequence, read N- to C-terminus: MIF-like protein mif-2 (120 aa).

The protein belongs to the MIF family.

The chain is MIF-like protein mif-2 (mif-2) from Caenorhabditis elegans.